We begin with the raw amino-acid sequence, 210 residues long: 3 beta-hydroxysteroid dehydrogenase/Delta 5--&gt;4-isomerase (210 aa).

The active-site Proton acceptor is tyrosine 29. Lysine 33 lines the NAD(+) pocket.

Belongs to the 3-beta-HSD family.

The catalysed reaction is a 3beta-hydroxy-Delta(5)-steroid + NAD(+) = a 3-oxo-Delta(5)-steroid + NADH + H(+). It carries out the reaction a 3-oxo-Delta(5)-steroid = a 3-oxo-Delta(4)-steroid. It participates in lipid metabolism; steroid biosynthesis. Its function is as follows. Catalyzes the oxidative conversion of Delta(5)-ene-3-beta-hydroxy steroid, and the oxidative conversion of ketosteroids. The 3-beta-HSD enzymatic system plays a crucial role in the biosynthesis of all classes of hormonal steroids. During viral infection, steroid production contributes to virulence by inhibiting the host inflammatory response. The chain is 3 beta-hydroxysteroid dehydrogenase/Delta 5--&gt;4-isomerase (OPG174) from Variola virus (isolate Human/India/Ind3/1967) (VARV).